A 232-amino-acid chain; its full sequence is 7-cyano-7-deazaguanine synthase (232 aa).

8-18 (FSGGQDSTTCL) is an ATP binding site. Zn(2+) is bound by residues C189, C198, C201, and C204.

Belongs to the QueC family. Requires Zn(2+) as cofactor.

It catalyses the reaction 7-carboxy-7-deazaguanine + NH4(+) + ATP = 7-cyano-7-deazaguanine + ADP + phosphate + H2O + H(+). Its pathway is purine metabolism; 7-cyano-7-deazaguanine biosynthesis. Functionally, catalyzes the ATP-dependent conversion of 7-carboxy-7-deazaguanine (CDG) to 7-cyano-7-deazaguanine (preQ(0)). This chain is 7-cyano-7-deazaguanine synthase, found in Yersinia pseudotuberculosis serotype O:1b (strain IP 31758).